We begin with the raw amino-acid sequence, 1598 residues long: Pentafunctional AROM polypeptide (1598 aa).

The 3-dehydroquinate synthase stretch occupies residues 1 to 384 (MGVPTKISIL…YEPRASTVSN (384 aa)). NAD(+) is bound by residues 44-46 (DTN), 81-84 (ESSK), 114-116 (GGV), and D119. A 7-phospho-2-dehydro-3-deoxy-D-arabino-heptonate-binding site is contributed by R130. 139 to 140 (TT) lines the NAD(+) pocket. D146 and K152 together coordinate 7-phospho-2-dehydro-3-deoxy-D-arabino-heptonate. K161 serves as a coordination point for NAD(+). N162 provides a ligand contact to 7-phospho-2-dehydro-3-deoxy-D-arabino-heptonate. NAD(+) is bound by residues 179–182 (FLNT) and N190. E194 is a binding site for Zn(2+). Residues 194–197 (EVIK) and K250 each bind 7-phospho-2-dehydro-3-deoxy-D-arabino-heptonate. E260 (proton acceptor; for 3-dehydroquinate synthase activity) is an active-site residue. 7-phospho-2-dehydro-3-deoxy-D-arabino-heptonate is bound by residues 264–268 (RNLLN) and H271. H271 contributes to the Zn(2+) binding site. The active-site Proton acceptor; for 3-dehydroquinate synthase activity is the H275. H287 and K356 together coordinate 7-phospho-2-dehydro-3-deoxy-D-arabino-heptonate. H287 contacts Zn(2+). The tract at residues 397-842 (VYPGFPKSLN…WNTLAQTFKV (446 aa)) is EPSP synthase. The active-site For EPSP synthase activity is C824. The segment at 867–1059 (AASIFIIGMR…RRKENTFFVS (193 aa)) is shikimate kinase. 874–881 (GMRGAGKT) provides a ligand contact to ATP. A 3-dehydroquinase region spans residues 1060 to 1280 (LTFPDLTPAS…AAPGQLSARE (221 aa)). The active-site Proton acceptor; for 3-dehydroquinate dehydratase activity is H1183. The active-site Schiff-base intermediate with substrate; for 3-dehydroquinate dehydratase activity is the K1211. The tract at residues 1293–1598 (AKKFAVIGKP…GVSSSDDTIS (306 aa)) is shikimate dehydrogenase.

It in the N-terminal section; belongs to the sugar phosphate cyclases superfamily. Dehydroquinate synthase family. This sequence in the 2nd section; belongs to the EPSP synthase family. The protein in the 3rd section; belongs to the shikimate kinase family. In the 4th section; belongs to the type-I 3-dehydroquinase family. It in the C-terminal section; belongs to the shikimate dehydrogenase family. In terms of assembly, homodimer. It depends on Zn(2+) as a cofactor.

The protein resides in the cytoplasm. It catalyses the reaction 7-phospho-2-dehydro-3-deoxy-D-arabino-heptonate = 3-dehydroquinate + phosphate. It carries out the reaction 3-dehydroquinate = 3-dehydroshikimate + H2O. The catalysed reaction is shikimate + NADP(+) = 3-dehydroshikimate + NADPH + H(+). The enzyme catalyses shikimate + ATP = 3-phosphoshikimate + ADP + H(+). It catalyses the reaction 3-phosphoshikimate + phosphoenolpyruvate = 5-O-(1-carboxyvinyl)-3-phosphoshikimate + phosphate. It functions in the pathway metabolic intermediate biosynthesis; chorismate biosynthesis; chorismate from D-erythrose 4-phosphate and phosphoenolpyruvate: step 2/7. Its pathway is metabolic intermediate biosynthesis; chorismate biosynthesis; chorismate from D-erythrose 4-phosphate and phosphoenolpyruvate: step 3/7. The protein operates within metabolic intermediate biosynthesis; chorismate biosynthesis; chorismate from D-erythrose 4-phosphate and phosphoenolpyruvate: step 4/7. It participates in metabolic intermediate biosynthesis; chorismate biosynthesis; chorismate from D-erythrose 4-phosphate and phosphoenolpyruvate: step 5/7. It functions in the pathway metabolic intermediate biosynthesis; chorismate biosynthesis; chorismate from D-erythrose 4-phosphate and phosphoenolpyruvate: step 6/7. Its function is as follows. The AROM polypeptide catalyzes 5 consecutive enzymatic reactions in prechorismate polyaromatic amino acid biosynthesis. This is Pentafunctional AROM polypeptide from Paracoccidioides brasiliensis (strain Pb18).